A 102-amino-acid chain; its full sequence is Cytochrome b (102 aa).

A run of 3 helical transmembrane segments spans residues 1–21 (FGSLLGVCLITQILTGLFLAM), 45–66 (WLIRNIHTNGASLFFICIYMHI), and 81–101 (WNIGVILFLMTMATAFMGYVF). Heme b-binding residues include His-51 and His-65.

It belongs to the cytochrome b family. In terms of assembly, the cytochrome bc1 complex contains 3 respiratory subunits (MT-CYB, CYC1 and UQCRFS1), 2 core proteins (UQCRC1 and UQCRC2) and probably 6 low-molecular weight proteins. It depends on heme b as a cofactor.

It localises to the mitochondrion inner membrane. Its function is as follows. Component of the ubiquinol-cytochrome c reductase complex (complex III or cytochrome b-c1 complex) that is part of the mitochondrial respiratory chain. The b-c1 complex mediates electron transfer from ubiquinol to cytochrome c. Contributes to the generation of a proton gradient across the mitochondrial membrane that is then used for ATP synthesis. In Plethodon yonahlossee (Yonahlossee salamander), this protein is Cytochrome b (mt-cyb).